We begin with the raw amino-acid sequence, 454 residues long: Metacaspase-1A (454 aa).

Residues 1 to 16 are compositionally biased toward gly residues; it reads MSYGYPGQGYGPGGGH. The segment at 1-129 is disordered; sequence MSYGYPGQGY…GHQTRNQGSH (129 aa). Low complexity-rich tracts occupy residues 38–47, 59–80, 88–101, and 109–120; these read YSNPGQGQYN, YHQQPPQQYQQGSYNQGQYPPQ, GQQQQHHQQGHSQR, and GYDIYGYPIGSG. Catalysis depends on residues His-244 and Cys-300.

The protein belongs to the peptidase C14B family.

Functionally, involved in cell death (apoptosis). This is Metacaspase-1A (casA) from Neurospora crassa (strain ATCC 24698 / 74-OR23-1A / CBS 708.71 / DSM 1257 / FGSC 987).